A 498-amino-acid chain; its full sequence is Cytochrome P450 monooxygenase apdB (498 aa).

Residues 20-40 (ASPQVFKLFVLILFVLLVLKI) traverse the membrane as a helical segment. Cys-457 contacts heme.

Belongs to the cytochrome P450 family. Heme is required as a cofactor.

The protein resides in the membrane. The protein operates within secondary metabolite biosynthesis. Its function is as follows. Cytochrome P450 monooxygenase; part of the gene cluster that mediates the biosynthesis of aspyridones. The polyketide-amino acid backbone preaspyridone A is first assembled by the PKS-NRPS hybrid apdA. The assembly of preaspyridone A is initiated by loading of malonyl-CoA onto apdA, followed by decarboxylation to yield the acetyl starter unit. The growing polyketide chain then elongates into a tetraketide. The adpA PKS module catalyzes three Claisen condensations, as well as beta-keto processing and methylation. Alpha-methylation step during polyketide synthesis is a prerequisite and a key checkpoint for chain transfer between PKS and NRPS modules. The downstream NRPS module contains the condensation (C), adenylation (A), and thiolation (T) domains and catalyzes the incorporation of tyrosine via the formation of the L-tyrosinyl-thioester and the amide linkage between L-tyrosinyl-thioester and the tetraketide. The bimodular assembly line is terminated with a reductase (R) domain that facilitates formation and release of the tetramic acid product. Because apdA lacks a designated enoylreductase (ER) domain, the required activity is provided the enoyl reductase apdC. ApdC appears to operate with different stereoselectivity in different PKS cycle. Combined with apdC, apdA is proposed to synthesize preaspyridone A via about 20 enzymatic steps. A number of oxidative steps performed successively by the cytochrome P450 monooxygenases apdE and apdB are required for the conversion of preaspyridone A to aspyridone A. The cytochrome P450 monooxygenase apdE is responsible for the oxidative dephenylation of preaspyridone A. Finally, the predicted FAD-dependent monooxygenase apdD and the acyl-CoA dehydrogenase apdG may be involved in the transformation of aspyridone A into aspyridone B. In Emericella nidulans (strain FGSC A4 / ATCC 38163 / CBS 112.46 / NRRL 194 / M139) (Aspergillus nidulans), this protein is Cytochrome P450 monooxygenase apdB.